The following is a 289-amino-acid chain: Phosphate import ATP-binding protein PstB (289 aa).

A disordered region spans residues 1 to 37 (MRSIDRPGGQAARPTIGSVAGASNTRTRDARSLPDTP). The ABC transporter domain occupies 41 to 284 (AAAENFSFYY…PVRRETEDYI (244 aa)). 73–80 (GPSGCGKS) is an ATP binding site.

Belongs to the ABC transporter superfamily. Phosphate importer (TC 3.A.1.7) family. In terms of assembly, the complex is composed of two ATP-binding proteins (PstB), two transmembrane proteins (PstC and PstA) and a solute-binding protein (PstS).

It localises to the cell inner membrane. The catalysed reaction is phosphate(out) + ATP + H2O = ADP + 2 phosphate(in) + H(+). In terms of biological role, part of the ABC transporter complex PstSACB involved in phosphate import. Responsible for energy coupling to the transport system. The sequence is that of Phosphate import ATP-binding protein PstB from Aromatoleum aromaticum (strain DSM 19018 / LMG 30748 / EbN1) (Azoarcus sp. (strain EbN1)).